Here is a 436-residue protein sequence, read N- to C-terminus: Bystin (436 aa).

Thr-145 is subject to Phosphothreonine. Residues Ser-148 and Ser-152 each carry the phosphoserine modification.

This sequence belongs to the bystin family.

Its subcellular location is the nucleus. The protein resides in the nucleolus. Its function is as follows. Required for processing of 20S pre-rRNA precursor and biogenesis of 40S ribosomal subunits. This is Bystin (bys) from Drosophila melanogaster (Fruit fly).